A 573-amino-acid polypeptide reads, in one-letter code: Sterol esterase 1 (573 aa).

At 1 to 12 the chain is on the cytoplasmic side; the sequence is MGVSAVLKRARN. The stretch at 13–33 is an intramembrane region; it reads LLATFIVCCFMAVVLVLALAH. Over 34 to 573 the chain is Cytoplasmic; it reads HFINEHRDTR…TELEMVAEKA (540 aa). Ser-315 functions as the Nucleophile in the catalytic mechanism. Residues Asp-489 and His-520 each act as charge relay system in the active site.

The protein belongs to the AB hydrolase superfamily. In terms of processing, not N-glycosylated.

It localises to the lipid droplet. It is found in the membrane. It carries out the reaction a sterol ester + H2O = a sterol + a fatty acid + H(+). Its function is as follows. Mediates the hydrolysis of steryl esters, thereby playing a central role in lipid metabolism. Under heme-deficient conditions, it constitutes the major steryl ester hydrolase, suggesting that it plays a central role in mobilization of steryl esters under anaerobic conditions. This is Sterol esterase 1 (YEH1) from Saccharomyces cerevisiae (strain ATCC 204508 / S288c) (Baker's yeast).